The sequence spans 323 residues: Beta-ketoacyl-[acyl-carrier-protein] synthase III (323 aa).

Active-site residues include cysteine 113 and histidine 250. An ACP-binding region spans residues 251–255; sequence QANKR. Residue asparagine 280 is part of the active site.

The protein belongs to the thiolase-like superfamily. FabH family. As to quaternary structure, homodimer.

It is found in the cytoplasm. It catalyses the reaction malonyl-[ACP] + acetyl-CoA + H(+) = 3-oxobutanoyl-[ACP] + CO2 + CoA. It functions in the pathway lipid metabolism; fatty acid biosynthesis. In terms of biological role, catalyzes the condensation reaction of fatty acid synthesis by the addition to an acyl acceptor of two carbons from malonyl-ACP. Catalyzes the first condensation reaction which initiates fatty acid synthesis and may therefore play a role in governing the total rate of fatty acid production. Possesses both acetoacetyl-ACP synthase and acetyl transacylase activities. Its substrate specificity determines the biosynthesis of branched-chain and/or straight-chain of fatty acids. The protein is Beta-ketoacyl-[acyl-carrier-protein] synthase III of Brucella canis (strain ATCC 23365 / NCTC 10854 / RM-666).